A 160-amino-acid polypeptide reads, in one-letter code: Endoribonuclease YbeY (160 aa).

Residues H121, H125, and H131 each coordinate Zn(2+).

It belongs to the endoribonuclease YbeY family. Zn(2+) is required as a cofactor.

It localises to the cytoplasm. Single strand-specific metallo-endoribonuclease involved in late-stage 70S ribosome quality control and in maturation of the 3' terminus of the 16S rRNA. The protein is Endoribonuclease YbeY of Hydrogenovibrio crunogenus (strain DSM 25203 / XCL-2) (Thiomicrospira crunogena).